The sequence spans 297 residues: Tyrosine recombinase XerD (297 aa).

Residues 2 to 86 enclose the Core-binding (CB) domain; it reads KKLDPIIEQF…CLRKFFRFLC (85 aa). The Tyr recombinase domain occupies 107 to 291; that stretch reads QLPKSLSEEQ…AKTRLKSIHK (185 aa). Catalysis depends on residues Arg-147, Lys-171, His-243, Arg-246, and His-269. Residue Tyr-278 is the O-(3'-phospho-DNA)-tyrosine intermediate of the active site.

Belongs to the 'phage' integrase family. XerD subfamily. In terms of assembly, forms a cyclic heterotetrameric complex composed of two molecules of XerC and two molecules of XerD.

Its subcellular location is the cytoplasm. Functionally, site-specific tyrosine recombinase, which acts by catalyzing the cutting and rejoining of the recombining DNA molecules. The XerC-XerD complex is essential to convert dimers of the bacterial chromosome into monomers to permit their segregation at cell division. It also contributes to the segregational stability of plasmids. The polypeptide is Tyrosine recombinase XerD (Haemophilus ducreyi (strain 35000HP / ATCC 700724)).